The chain runs to 559 residues: Dihydroxy-acid dehydratase (559 aa).

Aspartate 80 provides a ligand contact to Mg(2+). Cysteine 121 provides a ligand contact to [2Fe-2S] cluster. Aspartate 122 and lysine 123 together coordinate Mg(2+). N6-carboxylysine is present on lysine 123. Residue cysteine 194 participates in [2Fe-2S] cluster binding. Glutamate 447 contacts Mg(2+). Residue serine 473 is the Proton acceptor of the active site.

This sequence belongs to the IlvD/Edd family. In terms of assembly, homodimer. It depends on [2Fe-2S] cluster as a cofactor. Requires Mg(2+) as cofactor.

It catalyses the reaction (2R)-2,3-dihydroxy-3-methylbutanoate = 3-methyl-2-oxobutanoate + H2O. The enzyme catalyses (2R,3R)-2,3-dihydroxy-3-methylpentanoate = (S)-3-methyl-2-oxopentanoate + H2O. The protein operates within amino-acid biosynthesis; L-isoleucine biosynthesis; L-isoleucine from 2-oxobutanoate: step 3/4. It participates in amino-acid biosynthesis; L-valine biosynthesis; L-valine from pyruvate: step 3/4. Its function is as follows. Functions in the biosynthesis of branched-chain amino acids. Catalyzes the dehydration of (2R,3R)-2,3-dihydroxy-3-methylpentanoate (2,3-dihydroxy-3-methylvalerate) into 2-oxo-3-methylpentanoate (2-oxo-3-methylvalerate) and of (2R)-2,3-dihydroxy-3-methylbutanoate (2,3-dihydroxyisovalerate) into 2-oxo-3-methylbutanoate (2-oxoisovalerate), the penultimate precursor to L-isoleucine and L-valine, respectively. The chain is Dihydroxy-acid dehydratase from Chlorobium chlorochromatii (strain CaD3).